A 441-amino-acid polypeptide reads, in one-letter code: BTB/POZ domain-containing protein At2g24240 (441 aa).

The 71-residue stretch at 6-76 folds into the BTB domain; that stretch reads DRIKFNVGGR…LRTGDLNVPA (71 aa).

It participates in protein modification; protein ubiquitination. Its function is as follows. May act as a substrate-specific adapter of an E3 ubiquitin-protein ligase complex (CUL3-RBX1-BTB) which mediates the ubiquitination and subsequent proteasomal degradation of target proteins. This Arabidopsis thaliana (Mouse-ear cress) protein is BTB/POZ domain-containing protein At2g24240.